The primary structure comprises 513 residues: MGNHLSVNKLKRKKKKKSFLNIYGKNTNENTSKQSNDYKYDINTSCISREGTTTLERKNLILCHSGKLEDKYIIDEKLGQGTYGCVYKGIDKVTNQLYAIKEEKKDRLKNINRFFQEIEIMKKLDHPNIVKLYETYENDNYIYLIMELCSGRELFDSIIENGSFTEKNAATIMKQIFSAIFYLHSLNIVHRDLKPENFLFQSENKDSLLKIIDFGLSKNLGTGEFTTTKAGTPYYVAPQVLDGKYDKKCDIWSSGVIMYTLLCGYPPFYGDTDNEVLKKVKKGEFCFYENDWGSISSDAKNLITKLLTYNPNERCTIEEALNHPWITQMTKSHEHVELSSTLLKNLKNFKKENELKKIALTIIAKHLCDVEINNLRNIFIALDVDNSGTLSSQEILDGLKKIGYQKIPPDIHQVLRDIDSNASGQIHYTDFLAATIDKQTYLKKEVCLIPFKFFDIDGNGKISVEELKRIFGRDDIENPLIDKAIDSLLQEVDLNGDGEIDFHEFMLMMSKKK.

Residue Gly-2 is the site of N-myristoyl glycine attachment. Residues 72-326 (YIIDEKLGQG…IEEALNHPWI (255 aa)) enclose the Protein kinase domain. ATP-binding positions include 78 to 86 (LGQGTYGCV) and Lys-101. Asp-192 acts as the Proton acceptor in catalysis. The J domain autoinhibitory motif motif lies at 345–353 (NLKNFKKEN). The tract at residues 345–380 (NLKNFKKENELKKIALTIIAKHLCDVEINNLRNIFI) is j domain. The J domain EF-hand interaction motif motif lies at 354–363 (ELKKIALTII). EF-hand domains lie at 370–405 (VEIN…IGYQ), 406–441 (KIPP…KQTY), 442–477 (LKKE…DDIE), and 480–513 (LIDK…SKKK). 5 residues coordinate Ca(2+): Asp-383, Asp-385, Ser-387, Thr-389, and Glu-394. 10 residues coordinate Ca(2+): Asp-455, Asp-457, Asn-459, Lys-461, Glu-466, Asp-493, Asn-495, Asp-497, Glu-499, and Glu-504.

The protein belongs to the protein kinase superfamily. Ser/Thr protein kinase family. CDPK subfamily. Monomer. The cofactor is Mg(2+). Myristoylated; myristoylation may target it to different subcellular compartments. Post-translationally, autophosphorylated in vitro.

It carries out the reaction L-seryl-[protein] + ATP = O-phospho-L-seryl-[protein] + ADP + H(+). It catalyses the reaction L-threonyl-[protein] + ATP = O-phospho-L-threonyl-[protein] + ADP + H(+). Activated by calcium. Upon calcium binding to the EF-hand domains, the C-terminus of the junction domain (J domain) undergoes a conformational change which results in the dissociation of the pseudo-substrate inhibitory motif from the catalytic domain. This, in turn, may facilitate the autophosphorylation of the activation loop at Thr-232, which leads to the kinase activation. In terms of biological role, calcium-dependent protein kinase which acts as a sensor and effector of intracellular Ca(2+) levels probably in part downstream of cGMP-activated PKG kinase. During male gametogenesis in the mosquito gut, required for male exflagellation, possibly by regulating male gamete exit from the host erythrocytes. Not required for asexual blood stage proliferation. In Plasmodium falciparum (isolate K1 / Thailand), this protein is Calcium-dependent protein kinase 2.